The chain runs to 173 residues: MDIAIQHPWFKRTLGPFYPSRLFDQFFGEGLFEYDLLPFLSSTISPYYRQSLFRSVLDSGVSEVRSDRDKFVIFLDVKHFSPEDLTVKVQEDFVEIHGKHNERQDDHGYISREFHRRYRLPSNVDQTALSCSLSADGMLTFSGPKIPSGMDAGHSERAIPVSREEKPSSAPSS.

M1 carries the post-translational modification N-acetylmethionine. The segment at 1-63 (MDIAIQHPWF…RSVLDSGVSE (63 aa)) is required for complex formation with BFSP1 and BFSP2. The residue at position 6 (Q6) is a Deamidated glutamine; partial. Residue S45 is modified to Phosphoserine. Q50 is subject to Deamidated glutamine; partial. One can recognise a sHSP domain in the interval 52–162 (LFRSVLDSGV…GHSERAIPVS (111 aa)). K70 carries the N6-acetyllysine modification. At Q90 the chain carries Deamidated glutamine; partial. At K99 the chain carries N6-acetyllysine. H100 is a binding site for Zn(2+). N101 is subject to Deamidated asparagine; partial. 2 residues coordinate Zn(2+): E102 and H107. S122 carries the post-translational modification Phosphoserine. N123 bears the Deamidated asparagine; partial mark. The interval 144–173 (PKIPSGMDAGHSERAIPVSREEKPSSAPSS) is disordered. Residues 153-167 (GHSERAIPVSREEKP) are compositionally biased toward basic and acidic residues. H154 contacts Zn(2+). S162 is a glycosylation site (O-linked (GlcNAc) serine).

This sequence belongs to the small heat shock protein (HSP20) family. As to quaternary structure, heteromer composed of three CRYAA and one CRYAB subunits. Inter-subunit bridging via zinc ions enhances stability, which is crucial as there is no protein turn over in the lens. Can also form homodimers and homotetramers (dimers of dimers) which serve as the building blocks of homooligomers. Within homooligomers, the zinc-binding motif is created from residues of 3 different molecules. His-100 and Glu-102 from one molecule are ligands of the zinc ion, and His-107 and His-154 residues from additional molecules complete the site with tetrahedral coordination geometry. Part of a complex required for lens intermediate filament formation composed of BFSP1, BFSP2 and CRYAA. In terms of processing, acetylation at Lys-70 may increase chaperone activity. Post-translationally, undergoes age-dependent proteolytical cleavage at the C-terminus.

The protein localises to the cytoplasm. The protein resides in the nucleus. Functionally, contributes to the transparency and refractive index of the lens. Acts as a chaperone, preventing aggregation of various proteins under a wide range of stress conditions. Required for the correct formation of lens intermediate filaments as part of a complex composed of BFSP1, BFSP2 and CRYAA. This is Alpha-crystallin A chain (CRYAA) from Ceratotherium simum (White rhinoceros).